Consider the following 294-residue polypeptide: Extracellular metalloprotease TRV_07111 (294 aa).

Positions 1-19 are cleaved as a signal peptide; sequence MRFSVVFAAIAALSSVVTA. Asn49, Asn54, and Asn74 each carry an N-linked (GlcNAc...) asparagine glycan. Residue His185 participates in Zn(2+) binding. Residue Glu186 is part of the active site. His189 is a Zn(2+) binding site. Cys224 and Cys250 are joined by a disulfide.

Belongs to the peptidase M43B family.

It is found in the secreted. Secreted metalloproteinase that allows assimilation of proteinaceous substrates. Plays a pivotal role as a pathogenicity determinant during infections and contributes to the ability of the pathogen to persist within the mammalian host. The sequence is that of Extracellular metalloprotease TRV_07111 from Trichophyton verrucosum (strain HKI 0517).